A 611-amino-acid polypeptide reads, in one-letter code: Chaperone protein DnaK (611 aa).

Thr173 is modified (phosphothreonine; by autocatalysis). Disordered regions lie at residues 525–548 (DNIS…ALEG) and 573–611 (YQQA…EDKK). Residues 529 to 542 (EEDKSNAESKKDAL) show a composition bias toward basic and acidic residues. The span at 574–591 (QQAQQAQQQAQDGAQQTQ) shows a compositional bias: low complexity. Residues 599–611 (AEFKEVNDDEDKK) are compositionally biased toward basic and acidic residues.

The protein belongs to the heat shock protein 70 family.

Its function is as follows. Acts as a chaperone. The protein is Chaperone protein DnaK of Staphylococcus haemolyticus (strain JCSC1435).